An 83-amino-acid chain; its full sequence is Putative membrane protein insertion efficiency factor (83 aa).

The disordered stretch occupies residues 62 to 83 (KGGYDPVPPKSVKSAGNSKDSK).

It belongs to the UPF0161 family.

It localises to the cell inner membrane. In terms of biological role, could be involved in insertion of integral membrane proteins into the membrane. The sequence is that of Putative membrane protein insertion efficiency factor from Chlorobaculum tepidum (strain ATCC 49652 / DSM 12025 / NBRC 103806 / TLS) (Chlorobium tepidum).